The primary structure comprises 623 residues: Endoglucanase 12 (623 aa).

At 1-73 (MYSANHWGGS…LGCVVVKRKL (73 aa)) the chain is on the cytoplasmic side. The helical; Signal-anchor for type II membrane protein transmembrane segment at 74–94 (LWWVLWTLLAAFILIGLPVII) threads the bilayer. The Extracellular segment spans residues 95 to 623 (AKSIPKKKPH…TPPPPSKWKP (529 aa)). Residue Asp-166 is the Nucleophile of the active site. N-linked (GlcNAc...) asparagine glycans are attached at residues Asn-217, Asn-236, Asn-324, Asn-345, Asn-408, and Asn-425. Catalysis depends on residues His-513, Asp-561, and Glu-570.

Belongs to the glycosyl hydrolase 9 (cellulase E) family. Ubiquitous.

The protein localises to the membrane. The enzyme catalyses Endohydrolysis of (1-&gt;4)-beta-D-glucosidic linkages in cellulose, lichenin and cereal beta-D-glucans.. This chain is Endoglucanase 12 (GLU3), found in Oryza sativa subsp. japonica (Rice).